Reading from the N-terminus, the 76-residue chain is uncharacterized protein (76 aa).

A signal peptide spans 1-22 (MFTKALSVVLLTCALFSGQLMA).

This is an uncharacterized protein from Escherichia coli O157:H7.